The primary structure comprises 497 residues: Reticulophagy regulator 1 (497 aa).

A disordered region spans residues 1-51 (MASPAPPEHAEEGCPAPAAEEQAPPSPPPPQASPAERQQQEEEAQEAGAAE). Residues 1-59 (MASPAPPEHAEEGCPAPAAEEQAPPSPPPPQASPAERQQQEEEAQEAGAAEGAGLQVEE) are Cytoplasmic-facing. Residues 13–23 (GCPAPAAEEQA) are compositionally biased toward low complexity. Residues 60-80 (AAGRAAAAVTWLLGEPVLWLG) traverse the membrane as a helical segment. Residues 81–95 (CRADELLSWKRPLRS) lie on the Lumenal side of the membrane. Residues 84 to 233 (DELLSWKRPL…LLCAFLCPLF (150 aa)) are reticulon homology domain. Residues 96–116 (LLGFVAANLLFWFLALTPWRV) traverse the membrane as a helical segment. Residues 117–118 (YH) are Cytoplasmic-facing. Residues 119–139 (LISVMILGRVIMQIIKDMVLS) form a helical membrane-spanning segment. Residues 140-208 (RTRGAQLWRS…LVCSVCTFFT (69 aa)) lie on the Lumenal side of the membrane. S149 carries the phosphoserine modification. S151 carries the phosphoserine; by CAMK2B modification. S153 bears the Phosphoserine mark. The helical transmembrane segment at 209–229 (ILGSYIPGVILSYLLLLCAFL) threads the bilayer. The Cytoplasmic segment spans residues 230-497 (CPLFKCNDIG…GFLSNLLGGH (268 aa)). Over residues 319–330 (FNLSEGYTPQTD) the composition is skewed to polar residues. 4 disordered regions span residues 319–365 (FNLS…EDEL), 377–396 (KEQL…AAGL), 436–455 (LSQA…GDDF), and 468–497 (SELG…LGGH). Composition is skewed to basic and acidic residues over residues 334 to 348 (DLDR…RDLS) and 377 to 388 (KEQLDSGHRPSK). Residues 443 to 455 (PEEDTDTEEGDDF) show a composition bias toward acidic residues. Positions 453 to 458 (DDFELL) match the LIR motif motif. The span at 471–490 (GLTQDQEAEAQQNKKSSGFL) shows a compositional bias: polar residues.

Belongs to the RETREG family. In terms of assembly, homooligomer; oligomerization is enhanced following endoplasmic reticulum stress and is mediated by the reticulon homology domain. Interacts with ATG8 family modifier proteins MAP1LC3A, MAP1LC3B, MAP1LC3C, GABARAP, GABARAPL1 and GABARAPL2. Shows higher affinity for GABARAPL1 than for MAP1LC3A or MAP1LC3B. Phosphorylation at Ser-151 by CAMK2B enhances oligomerization and membrane scission and reticulophagy activity. As to expression, overexpressed in esophageal squamous cell carcinoma.

Its subcellular location is the golgi apparatus. It is found in the cis-Golgi network membrane. The protein resides in the endoplasmic reticulum membrane. In terms of biological role, endoplasmic reticulum (ER)-anchored autophagy regulator which mediates ER delivery into lysosomes through sequestration into autophagosomes. Promotes membrane remodeling and ER scission via its membrane bending capacity and targets the fragments into autophagosomes via interaction with ATG8 family proteins. Active under basal conditions. Required for collagen quality control in a LIR motif-dependent manner. Required for long-term survival of nociceptive and autonomic ganglion neurons. Its function is as follows. (Microbial infection) During SARS-CoV-2 infection, RETREG1-mediated reticulophagy is promoted by SARS-CoV-2 ORF3A protein. This induces endoplasmic reticulum stress and inflammatory responses and facilitates viral infection. The polypeptide is Reticulophagy regulator 1 (Homo sapiens (Human)).